The primary structure comprises 294 residues: Lipoyl synthase (294 aa).

7 residues coordinate [4Fe-4S] cluster: C38, C43, C49, C64, C68, C71, and S277. The region spanning 50 to 266 (WSRGTATFLL…RSFAEGAGFR (217 aa)) is the Radical SAM core domain.

It belongs to the radical SAM superfamily. Lipoyl synthase family. [4Fe-4S] cluster serves as cofactor.

Its subcellular location is the cytoplasm. The enzyme catalyses [[Fe-S] cluster scaffold protein carrying a second [4Fe-4S](2+) cluster] + N(6)-octanoyl-L-lysyl-[protein] + 2 oxidized [2Fe-2S]-[ferredoxin] + 2 S-adenosyl-L-methionine + 4 H(+) = [[Fe-S] cluster scaffold protein] + N(6)-[(R)-dihydrolipoyl]-L-lysyl-[protein] + 4 Fe(3+) + 2 hydrogen sulfide + 2 5'-deoxyadenosine + 2 L-methionine + 2 reduced [2Fe-2S]-[ferredoxin]. It functions in the pathway protein modification; protein lipoylation via endogenous pathway; protein N(6)-(lipoyl)lysine from octanoyl-[acyl-carrier-protein]: step 2/2. Functionally, catalyzes the radical-mediated insertion of two sulfur atoms into the C-6 and C-8 positions of the octanoyl moiety bound to the lipoyl domains of lipoate-dependent enzymes, thereby converting the octanoylated domains into lipoylated derivatives. In Pelodictyon phaeoclathratiforme (strain DSM 5477 / BU-1), this protein is Lipoyl synthase.